The sequence spans 840 residues: Intracellular phospholipase A1 (840 aa).

Disordered stretches follow at residues 1–142 (MSGS…RRRK) and 666–718 (KKNK…AANA). Over residues 26-39 (GKVKQKEKPKEKQM) the composition is skewed to basic and acidic residues. Residues 97 to 111 (SRPSGLPSNGNPGSS) show a composition bias toward low complexity. The DDHD domain occupies 564-827 (LEFKVKYLFA…ALFLANVLYC (264 aa)). The span at 668-680 (NKDDKTADARSGG) shows a compositional bias: basic and acidic residues. Positions 681–694 (DDENEDEDECDSDE) are enriched in acidic residues.

It belongs to the PA-PLA1 family.

It catalyses the reaction 1,2-dihexadecanoyl-sn-glycero-3-phospho-(1D-myo-inositol) + H2O = 2-hexadecanoyl-sn-glycero-3-phospho-(1D-myo-inositol) + hexadecanoate + H(+). The enzyme catalyses a 1,2-diacyl-sn-glycero-3-phospho-L-serine + H2O = a 2-acyl-sn-glycero-3-phospho-L-serine + a fatty acid + H(+). The catalysed reaction is 1-hexadecanoyl-2-(9Z-octadecenoyl)-sn-glycero-3-phospho-L-serine + H2O = 2-(9Z-octadecenoyl)-sn-glycero-3-phospho-L-serine + hexadecanoate + H(+). It carries out the reaction 1,2-di-(9Z-octadecenoyl)-sn-glycero-3-phosphocholine + H2O = (9Z-octadecenoyl)-sn-glycero-3-phosphocholine + (9Z)-octadecenoate + H(+). It catalyses the reaction a 1,2-diacyl-sn-glycero-3-phosphocholine + H2O = a 1-acyl-sn-glycero-3-phosphocholine + a fatty acid + H(+). The enzyme catalyses 1,2-dihexadecanoyl-sn-glycero-3-phosphocholine + H2O = 1-hexadecanoyl-sn-glycero-3-phosphocholine + hexadecanoate + H(+). Its activity is regulated as follows. Inhibited by E-6-bromomethylene-3-1-naphthalenyl-2H-tetrahydropyran-2-one (BEL) in vitro. Functionally, hydrolyzes the ester bond at the sn-1 position of glycerophospholipids and produces 2-acyl lysophospholipids, being phosphatidylinositol (PI) its major substrate. PI is a versatile lipid that not only serves as a structural component of cellular membranes, but also plays important roles in signal transduction through distinct phosphorylated derivatives of the inositol head group. Catalyzes the hydrolysis of phosphatidylcholine at sn-2 position in vitro. Regulates asymmetric division, an important property of stem cells in C.elegans, by controlling the subcellular localizations of beta-catenin. This Caenorhabditis elegans protein is Intracellular phospholipase A1.